The sequence spans 349 residues: Dihydroorotate dehydrogenase (quinone) (349 aa).

Residues Ala-65–Lys-69 and Ala-89 contribute to the FMN site. Residue Lys-69 participates in substrate binding. Asn-114–Phe-118 is a substrate binding site. The FMN site is built by Asn-143 and Asn-176. Residue Asn-176 coordinates substrate. Ser-179 serves as the catalytic Nucleophile. Asn-181 is a substrate binding site. Residues Lys-212 and Thr-240 each contribute to the FMN site. A substrate-binding site is contributed by Asn-241–Thr-242. The tract at residues Thr-244–Pro-265 is disordered. Basic and acidic residues predominate over residues Glu-245–Ala-255. Residues Gly-263, Gly-290, and Tyr-311–Thr-312 contribute to the FMN site.

Belongs to the dihydroorotate dehydrogenase family. Type 2 subfamily. As to quaternary structure, monomer. FMN serves as cofactor.

Its subcellular location is the cell membrane. The catalysed reaction is (S)-dihydroorotate + a quinone = orotate + a quinol. Its pathway is pyrimidine metabolism; UMP biosynthesis via de novo pathway; orotate from (S)-dihydroorotate (quinone route): step 1/1. In terms of biological role, catalyzes the conversion of dihydroorotate to orotate with quinone as electron acceptor. The sequence is that of Dihydroorotate dehydrogenase (quinone) from Halobacterium salinarum (strain ATCC 29341 / DSM 671 / R1).